The sequence spans 349 residues: Phosphoribosylformylglycinamidine cyclo-ligase (349 aa).

This sequence belongs to the AIR synthase family.

The protein localises to the cytoplasm. The enzyme catalyses 2-formamido-N(1)-(5-O-phospho-beta-D-ribosyl)acetamidine + ATP = 5-amino-1-(5-phospho-beta-D-ribosyl)imidazole + ADP + phosphate + H(+). The protein operates within purine metabolism; IMP biosynthesis via de novo pathway; 5-amino-1-(5-phospho-D-ribosyl)imidazole from N(2)-formyl-N(1)-(5-phospho-D-ribosyl)glycinamide: step 2/2. This Psychrobacter cryohalolentis (strain ATCC BAA-1226 / DSM 17306 / VKM B-2378 / K5) protein is Phosphoribosylformylglycinamidine cyclo-ligase.